Reading from the N-terminus, the 211-residue chain is Redox-sensing transcriptional repressor Rex (211 aa).

A DNA-binding region (H-T-H motif) is located at residues 13–52 (TYLRILEELEAQGVHRTSSEQLGELAQVTAFQVRKDLSYF). 87 to 92 (GMGRLG) serves as a coordination point for NAD(+).

It belongs to the transcriptional regulatory Rex family. In terms of assembly, homodimer.

The protein resides in the cytoplasm. Functionally, modulates transcription in response to changes in cellular NADH/NAD(+) redox state. The chain is Redox-sensing transcriptional repressor Rex from Thermus aquaticus.